A 146-amino-acid polypeptide reads, in one-letter code: Large ribosomal subunit protein uL15 (146 aa).

Basic and acidic residues predominate over residues 1-10 (MTLKLHDLRP). Residues 1 to 41 (MTLKLHDLRPARGSKIARTRVGRGDGSKGKTAGRGTKGTRA) form a disordered region.

This sequence belongs to the universal ribosomal protein uL15 family. Part of the 50S ribosomal subunit.

In terms of biological role, binds to the 23S rRNA. This is Large ribosomal subunit protein uL15 from Mycobacterium tuberculosis (strain ATCC 25177 / H37Ra).